Reading from the N-terminus, the 317-residue chain is Olfactory receptor 2T27 (317 aa).

Topologically, residues 1–22 are extracellular; the sequence is MEQSNYSVYADFILLGLFSNAR. N-linked (GlcNAc...) asparagine glycosylation occurs at N5. The chain crosses the membrane as a helical span at residues 23-43; sequence FPWLLFALILLVFLTSIASNV. Over 44-60 the chain is Cytoplasmic; it reads VKIILIHIDSRLHTPMY. A helical transmembrane segment spans residues 61–83; it reads FLLSQLSLRDILYISTIVPKMLV. Topologically, residues 84-97 are extracellular; sequence DQVMSQRAISFAGC. Cysteines 97 and 189 form a disulfide. The helical transmembrane segment at 98 to 118 threads the bilayer; sequence TAQHFLYLTLAGAEFFLLGLM. Over 119 to 139 the chain is Cytoplasmic; it reads SYDRYVAICNPLHYPVLMSRK. The helical transmembrane segment at 140–160 threads the bilayer; the sequence is ICWLIVAAAWLGGSIDGFLLT. The Extracellular portion of the chain corresponds to 161–197; it reads PVTMQFPFCASREINHFFCEVPALLKLSCTDTSAYET. The chain crosses the membrane as a helical span at residues 198 to 218; sequence AMYVCCIMMLLIPFSVISGSY. Over 219–244 the chain is Cytoplasmic; that stretch reads TRILITVYRMSEAEGRGKAVATCSSH. The chain crosses the membrane as a helical span at residues 245–265; it reads MVVVSLFYGAAMYTYVLPHSY. At 266-271 the chain is on the extracellular side; that stretch reads HTPEQD. A helical transmembrane segment spans residues 272 to 292; it reads KAVSAFYTILTPMLNPLIYSL. Topologically, residues 293 to 317 are cytoplasmic; the sequence is RNKDVTGALQKVVGRCVSSGKVTTF.

The protein belongs to the G-protein coupled receptor 1 family.

It is found in the cell membrane. Functionally, odorant receptor. The protein is Olfactory receptor 2T27 (OR2T27) of Homo sapiens (Human).